The chain runs to 469 residues: Phosphatidylcholine:ceramide cholinephosphotransferase 1 (469 aa).

Positions 40–177 (TTKIGPKLET…GDKPASPHDR (138 aa)) are disordered. Basic and acidic residues-rich tracts occupy residues 72–91 (AAEKVEKQHDDDGVVVHEET), 100–117 (SHHDKQKPGETKKSGDGK), and 162–177 (VRLEMPGDKPASPHDR). 6 helical membrane-spanning segments follow: residues 186 to 206 (LVAFLMLVVAAAGNTITLSWI), 231 to 251 (LRLCENLMIGSFVSLLVLILF), 262 to 282 (LCFIGSILYGMRCITMMVTPV), 300 to 320 (TFSLIVMRGVWSMFGLGLNLF), 327 to 347 (LCGDYIYSGHTLVLVVSALFI), and 355 to 375 (FYILHWLSWLVCSVGVIFLVL). His336 is an active-site residue. The Cytoplasmic portion of the chain corresponds to 376-469 (SHGHYTIDVI…RNGAARPAFE (94 aa)). Catalysis depends on residues His379 and Asp383.

This sequence belongs to the sphingomyelin synthase family.

It localises to the golgi apparatus membrane. It catalyses the reaction an N-acylsphing-4-enine + a 1,2-diacyl-sn-glycero-3-phosphocholine = a sphingomyelin + a 1,2-diacyl-sn-glycerol. The catalysed reaction is an N-acyl-15-methylhexadecasphing-4-enine + a 1,2-diacyl-sn-glycero-3-phosphocholine = an N-acyl-15-methylhexadecasphing-4-enine-1-phosphocholine + a 1,2-diacyl-sn-glycerol. Its pathway is lipid metabolism; sphingolipid metabolism. Functionally, sphingomyelin synthases (SM synthase or SMS) synthesize the sphingolipid sphingomyelin (SM) through transfer of the phosphatidyl head group of 1,2-diacyl-sn-glycero-3-phosphocholine (phosphatidylcholine, PC) on to the primary hydroxyl of ceramide (N-acylsphingoid base), yielding 1,2-diacyl-sn-glycerol (diacylglycerol, DAG) as a side product. Functions as a bidirectional lipid cholinephosphotransferases capable of converting PC and ceramide to SM and DAG and vice versa depending on the respective levels of ceramide and DAG as phosphocholine acceptors, respectively. This Caenorhabditis elegans protein is Phosphatidylcholine:ceramide cholinephosphotransferase 1 (sms-1).